We begin with the raw amino-acid sequence, 139 residues long: Large-conductance mechanosensitive channel (139 aa).

2 consecutive transmembrane segments (helical) span residues 9–29 and 79–99; these read AFAV…GAAF and IQTV…VKAI.

The protein belongs to the MscL family. In terms of assembly, homopentamer.

The protein localises to the cell inner membrane. Its function is as follows. Channel that opens in response to stretch forces in the membrane lipid bilayer. May participate in the regulation of osmotic pressure changes within the cell. The sequence is that of Large-conductance mechanosensitive channel from Pseudomonas putida (strain GB-1).